The chain runs to 80 residues: Small ribosomal subunit protein uS17 (80 aa).

It belongs to the universal ribosomal protein uS17 family. Part of the 30S ribosomal subunit.

Functionally, one of the primary rRNA binding proteins, it binds specifically to the 5'-end of 16S ribosomal RNA. The sequence is that of Small ribosomal subunit protein uS17 from Cereibacter sphaeroides (strain ATCC 17029 / ATH 2.4.9) (Rhodobacter sphaeroides).